The following is a 1112-amino-acid chain: Phytochrome E (1112 aa).

The tract at residues 1–20 is disordered; that stretch reads MGFESSSSAASNMKPQPQKS. Positions 217–387 constitute a GAF domain; the sequence is DIGALCDTVV…AFGLQLQMEL (171 aa). Cys-322 contributes to the phytochromobilin binding site. PAS domains lie at 595 to 666 and 732 to 803; these read FVCE…LQGE and DYKT…LISL. One can recognise a Histidine kinase domain in the interval 877-1096; sequence YVRQEIKNPL…FFQVDLQVKT (220 aa).

The protein belongs to the phytochrome family. As to quaternary structure, homodimer. Post-translationally, contains one covalently linked phytochromobilin chromophore.

Its function is as follows. Regulatory photoreceptor which exists in two forms that are reversibly interconvertible by light: the Pr form that absorbs maximally in the red region of the spectrum and the Pfr form that absorbs maximally in the far-red region. Photoconversion of Pr to Pfr induces an array of morphogenic responses, whereas reconversion of Pfr to Pr cancels the induction of those responses. Pfr controls the expression of a number of nuclear genes including those encoding the small subunit of ribulose-bisphosphate carboxylase, chlorophyll A/B binding protein, protochlorophyllide reductase, rRNA, etc. It also controls the expression of its own gene(s) in a negative feedback fashion. This chain is Phytochrome E (PHYE), found in Arabidopsis thaliana (Mouse-ear cress).